The primary structure comprises 557 residues: T-complex protein 1 subunit eta (557 aa).

The residue at position 2 (Ala2) is an N-acetylalanine. The tract at residues 529-557 is disordered; the sequence is PKSESAQGDAAGAMGRGRGGGRGRGMRRR. Residues 547–557 are compositionally biased toward basic residues; the sequence is GGGRGRGMRRR.

It belongs to the TCP-1 chaperonin family. Heterooligomeric complex of about 850 to 900 kDa that forms two stacked rings, 12 to 16 nm in diameter. Interacts with KNAT1.

The protein localises to the cytoplasm. In terms of biological role, molecular chaperone; assists the folding of proteins upon ATP hydrolysis. Known to play a role, in vitro, in the folding of actin and tubulin. This Arabidopsis thaliana (Mouse-ear cress) protein is T-complex protein 1 subunit eta.